The sequence spans 140 residues: Small ribosomal subunit protein bS16 (140 aa).

The disordered stretch occupies residues 86–140 (TVGKAKQAAKREEEAKQAAKEAAEAKAAAEAEAAAAAEAAKAEDAPDGETESSEG). A compositionally biased stretch (basic and acidic residues) spans 94–114 (AKREEEAKQAAKEAAEAKAAA). Positions 115–124 (EAEAAAAAEA) are enriched in low complexity. Over residues 130–140 (APDGETESSEG) the composition is skewed to acidic residues.

The protein belongs to the bacterial ribosomal protein bS16 family.

This is Small ribosomal subunit protein bS16 from Parasynechococcus marenigrum (strain WH8102).